Consider the following 897-residue polypeptide: Coiled-coil domain-containing protein lobo (897 aa).

The tract at residues 27–49 is disordered; the sequence is EIDEQRRSQGSESDFADEMEGEF. Positions 40-49 are enriched in acidic residues; sequence DFADEMEGEF. Coiled coils occupy residues 269–306 and 801–858; these read DLKSHLEEDMAEVHRQKEAEEKRIQDEIIRKQMEDLEL and SLLN…QRLT.

This sequence belongs to the DRC7 family. Testis-specific (at protein level).

Its subcellular location is the cell projection. The protein localises to the cilium. The protein resides in the flagellum. It is found in the cytoplasm. It localises to the cytoskeleton. Its subcellular location is the cilium axoneme. Its function is as follows. Key component of the nexin-dynein regulatory complex (N-DRC), essential for N-DRC integrity. Involved in the regulation of flagellar motility. Involved in sperm motility. Required for the sperm to enter in the coiled storage seminal receptacle (SR) tubule. The sequence is that of Coiled-coil domain-containing protein lobo (lobo) from Drosophila melanogaster (Fruit fly).